The primary structure comprises 252 residues: Ribosomal RNA small subunit methyltransferase J (252 aa).

Residues 104–105 (RD), 120–121 (ER), 156–157 (SS), and D174 each bind S-adenosyl-L-methionine.

Belongs to the methyltransferase superfamily. RsmJ family.

It is found in the cytoplasm. The catalysed reaction is guanosine(1516) in 16S rRNA + S-adenosyl-L-methionine = N(2)-methylguanosine(1516) in 16S rRNA + S-adenosyl-L-homocysteine + H(+). In terms of biological role, specifically methylates the guanosine in position 1516 of 16S rRNA. This chain is Ribosomal RNA small subunit methyltransferase J, found in Yersinia enterocolitica serotype O:8 / biotype 1B (strain NCTC 13174 / 8081).